Consider the following 327-residue polypeptide: D-alanine--D-alanine ligase (327 aa).

Residues 113–312 form the ATP-grasp domain; the sequence is KRLWMTHDLS…YEDFVMQVVA (200 aa). ATP is bound at residue 139-194; it reads VADLGLPLIVKPAREGSSIGLSKVTDASQMREAFEKAAALDNDVIAETFIDGAELT. Residues aspartate 266, glutamate 279, and asparagine 281 each coordinate Mg(2+).

Belongs to the D-alanine--D-alanine ligase family. Requires Mg(2+) as cofactor. Mn(2+) serves as cofactor.

The protein resides in the cytoplasm. It catalyses the reaction 2 D-alanine + ATP = D-alanyl-D-alanine + ADP + phosphate + H(+). The protein operates within cell wall biogenesis; peptidoglycan biosynthesis. In terms of biological role, cell wall formation. This Cupriavidus pinatubonensis (strain JMP 134 / LMG 1197) (Cupriavidus necator (strain JMP 134)) protein is D-alanine--D-alanine ligase.